We begin with the raw amino-acid sequence, 509 residues long: MALPWYRVHTVVLNDPGRLIAVHLMHTALVAGWAGSMALYELAVFDPSDPVLNPMWRQGMFVMPFMTRLGITDSWGGWSITGESVSNPGIWSFEGVALSHIILSGMCFLAAIWHWVYWDLELFRDPRTGEPALDLPKIFGIHLFLSGLLCFGFGAFHVTGLFGPGIWVSDAYGVTGKVQPVAPAWGADGFNPFNPGGIAAHHIAAGIFGIFAGIFHLTVRPPQRLYRALRMGNIETVLSSSIAAVFFAAFVTSGTMWYGAAATPIELFGPTRYQWDSGYFQQEIERQVETSVSEGLSESQAWSRIPDKLAFYDYIGNNPAKGGLFRAGPMNKGDGIAEAWLGHPIFRDKDGRELTVRRMPAFFETFPVILVDKDGIIRADIPFRRAESKYSIEQVGVTVDFYGGKLNGQTFKDAPTVKKFARKAQLGEVFEFDRTSLESDGVFRSSPRGWYTFGHANFALLFFFGHLWHGGRTIFRDVFTGIGAEVTEQVEFGAFQKLGDKSTKKQGAV.

The next 6 membrane-spanning stretches (helical) occupy residues 21–36 (AVHLMHTALVAGWAGS), 101–115 (IILSGMCFLAAIWHW), 140–156 (GIHLFLSGLLCFGFGAF), 203–218 (IAAGIFGIFAGIFHLT), 237–252 (VLSSSIAAVFFAAFVT), and 457–472 (NFALLFFFGHLWHGGR).

Belongs to the PsbB/PsbC family. PsbB subfamily. As to quaternary structure, PSII is composed of 1 copy each of membrane proteins PsbA, PsbB, PsbC, PsbD, PsbE, PsbF, PsbH, PsbI, PsbJ, PsbK, PsbL, PsbM, PsbT, PsbX, PsbY, PsbZ, Psb30/Ycf12, at least 3 peripheral proteins of the oxygen-evolving complex and a large number of cofactors. It forms dimeric complexes. The cofactor is Binds multiple chlorophylls. PSII binds additional chlorophylls, carotenoids and specific lipids..

The protein resides in the plastid. It is found in the chloroplast thylakoid membrane. In terms of biological role, one of the components of the core complex of photosystem II (PSII). It binds chlorophyll and helps catalyze the primary light-induced photochemical processes of PSII. PSII is a light-driven water:plastoquinone oxidoreductase, using light energy to abstract electrons from H(2)O, generating O(2) and a proton gradient subsequently used for ATP formation. The protein is Photosystem II CP47 reaction center protein of Trieres chinensis (Marine centric diatom).